Reading from the N-terminus, the 71-residue chain is Palustrin-Ca (71 aa).

The N-terminal stretch at 1–22 is a signal peptide; the sequence is MFTLKKSLLLLFFLGTISLSLC. Positions 23–40 are excised as a propeptide; sequence EQERDADGDEGEVEEVKR. A disulfide bridge links Cys-63 with Cys-69.

It belongs to the frog skin active peptide (FSAP) family. Brevinin subfamily. In terms of tissue distribution, expressed by the skin glands.

It localises to the secreted. Its subcellular location is the target cell membrane. In terms of biological role, antibacterial peptide with amphipathic alpha-helical structure that exhibits potent broad-spectrum activity against Gram-positive and -negative bacteria. It is active against Listeria ATCC 54004 (MIC=30 ug/ml), S.aureus ATCC 25923 (MIC=7.8 ug/ml), S.suis 2 CVCC 606 (MIC=31.25 ug/ml), B.subtilis ADB403 (30 ug/ml), K.pneumoniae ATCC 700603 (MIC=60 ug/ml) and P.aeruginosa ATCC 227853 (MIC=30 ug/ml). Does not show activity against Salmonella ATCC 20020 and the fungus Candida albicans. Is also cytotoxic to HeLa cells at high concentrations. In addition, shows a strong antitumor activity but only a little hemolytic activity. Despite the presence of a Gly residue at position 10, this alpha-helical peptide remains relatively rigid, not exhibiting any significant flexibility during the molecular dynamics simulation. The peptide shows a preference for a position parallel to the target membrane that suggests it exerts its antimicrobial activity through a non-pore-forming mechanism of action, such as the carpet model or the interfacial activity model. This chain is Palustrin-Ca, found in Aquarana catesbeiana (American bullfrog).